Consider the following 274-residue polypeptide: Formamidopyrimidine-DNA glycosylase (274 aa).

The active-site Schiff-base intermediate with DNA is P2. Catalysis depends on E3, which acts as the Proton donor. Residue K60 is the Proton donor; for beta-elimination activity of the active site. DNA contacts are provided by H93 and R112. The FPG-type zinc finger occupies 240 to 274 (FVYGRKGEPCKRCGTPIEKTVVAGRGTHYCPRCQR). The active-site Proton donor; for delta-elimination activity is R264.

It belongs to the FPG family. As to quaternary structure, monomer. Requires Zn(2+) as cofactor.

It carries out the reaction Hydrolysis of DNA containing ring-opened 7-methylguanine residues, releasing 2,6-diamino-4-hydroxy-5-(N-methyl)formamidopyrimidine.. The enzyme catalyses 2'-deoxyribonucleotide-(2'-deoxyribose 5'-phosphate)-2'-deoxyribonucleotide-DNA = a 3'-end 2'-deoxyribonucleotide-(2,3-dehydro-2,3-deoxyribose 5'-phosphate)-DNA + a 5'-end 5'-phospho-2'-deoxyribonucleoside-DNA + H(+). Involved in base excision repair of DNA damaged by oxidation or by mutagenic agents. Acts as a DNA glycosylase that recognizes and removes damaged bases. Has a preference for oxidized purines, such as 7,8-dihydro-8-oxoguanine (8-oxoG). Has AP (apurinic/apyrimidinic) lyase activity and introduces nicks in the DNA strand. Cleaves the DNA backbone by beta-delta elimination to generate a single-strand break at the site of the removed base with both 3'- and 5'-phosphates. This is Formamidopyrimidine-DNA glycosylase from Geobacillus kaustophilus (strain HTA426).